Reading from the N-terminus, the 197-residue chain is Probable GTP-binding protein EngB (197 aa).

The EngB-type G domain maps to 25-197 (SAPEIAFAGR…VRDEFFKFTR (173 aa)). Residues 33 to 40 (GRSNVGKS), 60 to 64 (GCTRQ), 79 to 82 (DLPG), 146 to 149 (TKID), and 177 to 179 (MSI) each bind GTP. Mg(2+)-binding residues include serine 40 and threonine 62.

The protein belongs to the TRAFAC class TrmE-Era-EngA-EngB-Septin-like GTPase superfamily. EngB GTPase family. The cofactor is Mg(2+).

In terms of biological role, necessary for normal cell division and for the maintenance of normal septation. The polypeptide is Probable GTP-binding protein EngB (Wolbachia pipientis wMel).